Reading from the N-terminus, the 195-residue chain is Peptidyl-tRNA hydrolase (195 aa).

Y17 contacts tRNA. H22 acts as the Proton acceptor in catalysis. TRNA contacts are provided by Y68, N70, and N116.

It belongs to the PTH family. As to quaternary structure, monomer.

Its subcellular location is the cytoplasm. The enzyme catalyses an N-acyl-L-alpha-aminoacyl-tRNA + H2O = an N-acyl-L-amino acid + a tRNA + H(+). Hydrolyzes ribosome-free peptidyl-tRNAs (with 1 or more amino acids incorporated), which drop off the ribosome during protein synthesis, or as a result of ribosome stalling. Functionally, catalyzes the release of premature peptidyl moieties from peptidyl-tRNA molecules trapped in stalled 50S ribosomal subunits, and thus maintains levels of free tRNAs and 50S ribosomes. This is Peptidyl-tRNA hydrolase from Shewanella sp. (strain MR-4).